A 398-amino-acid polypeptide reads, in one-letter code: Arginine biosynthesis bifunctional protein ArgJ (398 aa).

6 residues coordinate substrate: Thr148, Lys174, Thr185, Glu271, Asn393, and Thr398. Catalysis depends on Thr185, which acts as the Nucleophile.

It belongs to the ArgJ family. In terms of assembly, heterotetramer of two alpha and two beta chains.

The protein resides in the cytoplasm. The catalysed reaction is N(2)-acetyl-L-ornithine + L-glutamate = N-acetyl-L-glutamate + L-ornithine. It carries out the reaction L-glutamate + acetyl-CoA = N-acetyl-L-glutamate + CoA + H(+). The protein operates within amino-acid biosynthesis; L-arginine biosynthesis; L-ornithine and N-acetyl-L-glutamate from L-glutamate and N(2)-acetyl-L-ornithine (cyclic): step 1/1. Its pathway is amino-acid biosynthesis; L-arginine biosynthesis; N(2)-acetyl-L-ornithine from L-glutamate: step 1/4. Catalyzes two activities which are involved in the cyclic version of arginine biosynthesis: the synthesis of N-acetylglutamate from glutamate and acetyl-CoA as the acetyl donor, and of ornithine by transacetylation between N(2)-acetylornithine and glutamate. The chain is Arginine biosynthesis bifunctional protein ArgJ from Listeria monocytogenes serotype 4b (strain F2365).